Reading from the N-terminus, the 243-residue chain is Zinc import ATP-binding protein ZnuC (243 aa).

One can recognise an ABC transporter domain in the interval 8–225; that stretch reads LNLSNVSYYI…SEFQKLFGHH (218 aa). 40–47 is an ATP binding site; it reads GPNGAGKS.

Belongs to the ABC transporter superfamily. Zinc importer (TC 3.A.1.15.5) family. As to quaternary structure, the complex is composed of two ATP-binding proteins (ZnuC), two transmembrane proteins (ZnuB) and a solute-binding protein (ZnuA).

The protein resides in the cell inner membrane. It carries out the reaction Zn(2+)(out) + ATP(in) + H2O(in) = Zn(2+)(in) + ADP(in) + phosphate(in) + H(+)(in). Its function is as follows. Part of the ABC transporter complex ZnuABC involved in zinc import. Responsible for energy coupling to the transport system. The polypeptide is Zinc import ATP-binding protein ZnuC (Psychrobacter arcticus (strain DSM 17307 / VKM B-2377 / 273-4)).